The following is a 181-amino-acid chain: UPF0228 protein MA_3117 (181 aa).

It belongs to the UPF0228 family.

This is UPF0228 protein MA_3117 from Methanosarcina acetivorans (strain ATCC 35395 / DSM 2834 / JCM 12185 / C2A).